A 361-amino-acid polypeptide reads, in one-letter code: 5-formaminoimidazole-4-carboxamide-1-(beta)-D-ribofuranosyl 5'-monophosphate synthetase (361 aa).

The 5-amino-1-(5-phospho-beta-D-ribosyl)imidazole-4-carboxamide site is built by histidine 27 and serine 94. One can recognise an ATP-grasp domain in the interval 116-348 (RAILRWEAER…MGQRIAKEIK (233 aa)). ATP-binding positions include 146–208 (PDEI…ANYC) and glutamate 230. Asparagine 258 contacts 5-amino-1-(5-phospho-beta-D-ribosyl)imidazole-4-carboxamide. Mg(2+)-binding residues include glutamine 297 and glutamate 310.

This sequence belongs to the phosphohexose mutase family. Mg(2+) serves as cofactor. Mn(2+) is required as a cofactor.

It carries out the reaction 5-amino-1-(5-phospho-beta-D-ribosyl)imidazole-4-carboxamide + formate + ATP = 5-formamido-1-(5-phospho-D-ribosyl)imidazole-4-carboxamide + ADP + phosphate. It participates in purine metabolism; IMP biosynthesis via de novo pathway; 5-formamido-1-(5-phospho-D-ribosyl)imidazole-4-carboxamide from 5-amino-1-(5-phospho-D-ribosyl)imidazole-4-carboxamide (formate route): step 1/1. Catalyzes the ATP- and formate-dependent formylation of 5-aminoimidazole-4-carboxamide-1-beta-d-ribofuranosyl 5'-monophosphate (AICAR) to 5-formaminoimidazole-4-carboxamide-1-beta-d-ribofuranosyl 5'-monophosphate (FAICAR) in the absence of folates. The polypeptide is 5-formaminoimidazole-4-carboxamide-1-(beta)-D-ribofuranosyl 5'-monophosphate synthetase (Methanococcus vannielii (strain ATCC 35089 / DSM 1224 / JCM 13029 / OCM 148 / SB)).